Consider the following 73-residue polypeptide: Translation initiation factor IF-1 (73 aa).

Positions 1–73 (MDIKEEAIET…TKGRIVYREK (73 aa)) constitute an S1-like domain.

Belongs to the IF-1 family. As to quaternary structure, component of the 30S ribosomal translation pre-initiation complex which assembles on the 30S ribosome in the order IF-2 and IF-3, IF-1 and N-formylmethionyl-tRNA(fMet); mRNA recruitment can occur at any time during PIC assembly.

Its subcellular location is the cytoplasm. Functionally, one of the essential components for the initiation of protein synthesis. Stabilizes the binding of IF-2 and IF-3 on the 30S subunit to which N-formylmethionyl-tRNA(fMet) subsequently binds. Helps modulate mRNA selection, yielding the 30S pre-initiation complex (PIC). Upon addition of the 50S ribosomal subunit IF-1, IF-2 and IF-3 are released leaving the mature 70S translation initiation complex. This chain is Translation initiation factor IF-1, found in Borreliella afzelii (strain PKo) (Borrelia afzelii).